A 1050-amino-acid polypeptide reads, in one-letter code: Transcription intermediary factor 1-alpha (1050 aa).

Residue K7 forms a Glycyl lysine isopeptide (Lys-Gly) (interchain with G-Cter in SUMO2) linkage. The segment covering A15–E30 has biased composition (low complexity). A disordered region spans residues A15–G44. Over residues A33–G44 the composition is skewed to basic and acidic residues. The RING-type zinc finger occupies C56–L82. T101 carries the phosphothreonine modification. Phosphoserine is present on S110. B box-type zinc fingers lie at residues K158–E211 and Q218–I259. C163, C166, C187, and H200 together coordinate Zn(2+). K205 is covalently cross-linked (Glycyl lysine isopeptide (Lys-Gly) (interchain with G-Cter in SUMO2)). 4 residues coordinate Zn(2+): C223, H226, C246, and H251. Residue K276 forms a Glycyl lysine isopeptide (Lys-Gly) (interchain with G-Cter in SUMO2) linkage. A coiled-coil region spans residues N289–V359. A disordered region spans residues E429 to L456. Positions Q431–L456 are enriched in polar residues. Glycyl lysine isopeptide (Lys-Gly) (interchain with G-Cter in SUMO2) cross-links involve residues K436 and K458. R469 carries the omega-N-methylarginine modification. Low complexity-rich tracts occupy residues Q476–P490 and Q499–Q510. Residues Q476 to A550 are disordered. Positions P526 to P535 are enriched in pro residues. A Glycyl lysine isopeptide (Lys-Gly) (interchain with G-Cter in SUMO2) cross-link involves residue K552. Positions I571 to T594 are disordered. Residues T577–T594 show a composition bias toward low complexity. A Glycyl lysine isopeptide (Lys-Gly) (interchain with G-Cter in SUMO2) cross-link involves residue K641. The interval T643–V712 is disordered. 3 positions are modified to phosphoserine: S654, S660, and S667. Positions S654 to P666 are enriched in polar residues. Low complexity predominate over residues S685 to D707. Glycyl lysine isopeptide (Lys-Gly) (interchain with G-Cter in SUMO2) cross-links involve residues K702 and K711. K723 participates in a covalent cross-link: Glycyl lysine isopeptide (Lys-Gly) (interchain with G-Cter in SUMO1); alternate. A Glycyl lysine isopeptide (Lys-Gly) (interchain with G-Cter in SUMO2); alternate cross-link involves residue K723. Residue K741 forms a Glycyl lysine isopeptide (Lys-Gly) (interchain with G-Cter in SUMO2) linkage. At S744 the chain carries Phosphoserine. The tract at residues N754–R779 is nuclear receptor binding site (NRBS). The tract at residues N766 to P824 is disordered. S768 carries the post-translational modification Phosphoserine; by ATM. K801 is covalently cross-linked (Glycyl lysine isopeptide (Lys-Gly) (interchain with G-Cter in SUMO2)). S808 bears the Phosphoserine mark. A Glycyl lysine isopeptide (Lys-Gly) (interchain with G-Cter in SUMO2) cross-link involves residue K810. S811 is modified (phosphoserine). The residue at position 818 (T818) is a Phosphothreonine. The PHD-type zinc-finger motif lies at E826 to L873. An interaction with histone H3 that is not methylated at 'Lys-4' (H3K4me0) region spans residues N834 to C840. A Glycyl lysine isopeptide (Lys-Gly) (interchain with G-Cter in SUMO2) cross-link involves residue K875. The Nuclear localization signal signature appears at K891–K907. The 106-residue stretch at K899 to L1004 folds into the Bromo domain. K949 participates in a covalent cross-link: Glycyl lysine isopeptide (Lys-Gly) (interchain with G-Cter in SUMO2). The interaction with histone H3 that is acetylated at 'Lys-23' (H3K23ac) stretch occupies residues F979–N980. K992 is covalently cross-linked (Glycyl lysine isopeptide (Lys-Gly) (interchain with G-Cter in SUMO2)). Over residues P1011–D1026 the composition is skewed to basic and acidic residues. The disordered stretch occupies residues P1011–R1036. S1019, S1025, and S1028 each carry phosphoserine. K1041 is covalently cross-linked (Glycyl lysine isopeptide (Lys-Gly) (interchain with G-Cter in SUMO2)). The residue at position 1042 (S1042) is a Phosphoserine.

In terms of assembly, interacts with CARM1, NCOA2/GRIP1, PML, KAT5/TIP60, BRD7, CBX1, CBX3 and CBX5. Part of a coactivator complex containing TRIM24, NCOA2 and CARM1. Interacts with NR3C2/MCR. Interacts with the ligand-binding domain of estrogen receptors (in vitro). Interaction with DNA-bound estrogen receptors requires the presence of estradiol. Interacts with AR and p53/TP53. Interacts (via bromo domain) with histone H3 (via N-terminus), provided that it is not methylated at 'Lys-4' (H3K4me0). Does not interact with histone H3 that is methylated at 'Lys-4' (H3K4me1, H3K4me2 or H3K4me3). Interacts (via bromo domain) with histone H3 (via N-terminus) that is acetylated at 'Lys-23' (H3K23ac). Has the highest affinity for histone H3 that is both unmodified at 'Lys-4' (H3K4me0) and acetylated at 'Lys-23' (H3K23ac). Has very low affinity for histone H3 that is methylated at 'Lys-9' (H3K9me), or acetylated at both 'Lys-9' (H3K9ac) and 'Lys-14' (H3K14ac), or acetylated at 'Lys-27' (H3K27ac) (in vitro). Interacts with TRIM16. In terms of processing, phosphorylated at Ser-768 by ATM kinase induces ubiquitination and degradation during DNA damage. Post-translationally, sumoylated. Undergoes ubiquitination-mediated degradation in response to DNA damage.

It localises to the nucleus. Its subcellular location is the cytoplasm. It is found in the mitochondrion. It carries out the reaction S-ubiquitinyl-[E2 ubiquitin-conjugating enzyme]-L-cysteine + [acceptor protein]-L-lysine = [E2 ubiquitin-conjugating enzyme]-L-cysteine + N(6)-ubiquitinyl-[acceptor protein]-L-lysine.. The protein operates within protein modification; protein ubiquitination. In terms of biological role, transcriptional coactivator that interacts with numerous nuclear receptors and coactivators and modulates the transcription of target genes. Interacts with chromatin depending on histone H3 modifications, having the highest affinity for histone H3 that is both unmodified at 'Lys-4' (H3K4me0) and acetylated at 'Lys-23' (H3K23ac). Has E3 protein-ubiquitin ligase activity. During the DNA damage response, participates in an autoregulatory feedback loop with TP53. Early in response to DNA damage, ATM kinase phosphorylates TRIM24 leading to its ubiquitination and degradation. After sufficient DNA repair has occurred, TP53 activates TRIM24 transcription, ultimately leading to TRIM24-mediated TP53 ubiquitination and degradation. Plays a role in the regulation of cell proliferation and apoptosis, at least in part via its effects on p53/TP53 levels. Up-regulates ligand-dependent transcription activation by AR, GCR/NR3C1, thyroid hormone receptor (TR) and ESR1. Modulates transcription activation by retinoic acid (RA) receptors, including RARA. Plays a role in regulating retinoic acid-dependent proliferation of hepatocytes. Also participates in innate immunity by mediating the specific 'Lys-63'-linked ubiquitination of TRAF3 leading to activation of downstream signal transduction of the type I IFN pathway. Additionally, negatively regulates NLRP3/CASP1/IL-1beta-mediated pyroptosis and cell migration probably by ubiquitinating NLRP3. This is Transcription intermediary factor 1-alpha (TRIM24) from Homo sapiens (Human).